The following is a 91-amino-acid chain: Potassium channel toxin BmTXK-beta-2 (91 aa).

The signal sequence occupies residues 1–19 (MQRNLVVLLFLGMVALSSC). Residues 20-27 (GLREKHFQ) constitute a propeptide that is removed on maturation. The 38-residue stretch at 54-91 (QFGCPAYQGYCDDHCQDIKKEEGFCHGFKCKCGIPMGF) folds into the BetaSPN-type CS-alpha/beta domain. Cystine bridges form between Cys57-Cys78, Cys64-Cys83, and Cys68-Cys85.

The protein belongs to the long chain scorpion toxin family. Class 1 subfamily. As to expression, expressed by the venom gland.

The protein resides in the secreted. In terms of biological role, inhibits voltage-gated potassium channel. The polypeptide is Potassium channel toxin BmTXK-beta-2 (Olivierus martensii (Manchurian scorpion)).